The primary structure comprises 236 residues: Uridylate kinase (236 aa).

Lysine 10 to glycine 13 lines the ATP pocket. Residue glycine 52 participates in UMP binding. Glycine 53 and arginine 57 together coordinate ATP. Residues aspartate 72 and threonine 133–threonine 140 contribute to the UMP site. Residues threonine 160, tyrosine 166, and aspartate 169 each contribute to the ATP site.

It belongs to the UMP kinase family. Homohexamer.

The protein resides in the cytoplasm. It catalyses the reaction UMP + ATP = UDP + ADP. The protein operates within pyrimidine metabolism; CTP biosynthesis via de novo pathway; UDP from UMP (UMPK route): step 1/1. Inhibited by UTP. Catalyzes the reversible phosphorylation of UMP to UDP. The chain is Uridylate kinase from Parabacteroides distasonis (strain ATCC 8503 / DSM 20701 / CIP 104284 / JCM 5825 / NCTC 11152).